A 581-amino-acid polypeptide reads, in one-letter code: Coiled-coil domain-containing protein 102A (581 aa).

Disordered stretches follow at residues 1 to 61 (MNHT…GLGC), 156 to 219 (QRVR…IGTD), 496 to 517 (QAEDELDEAHNQTRKLQRSLDE), and 534 to 581 (SRLR…LQIP). Over residues 39–59 (TPSPSGGTPSSSPPLLLSPGL) the composition is skewed to low complexity. A coiled-coil region spans residues 70–164 (REELRLRELE…AQRVRAEQSS (95 aa)). The segment covering 161–184 (EQSSPENASTAPESISSTASTHSN) has biased composition (polar residues). A compositionally biased stretch (basic and acidic residues) spans 185-202 (QPREAEIKQDNQDEEGVR). Positions 270–541 (AALEEDTSKL…LQSRLRRQQN (272 aa)) form a coiled coil. Positions 559–581 (EDADGPPSDPDEDEEEELQLQIP) are enriched in acidic residues.

The chain is Coiled-coil domain-containing protein 102A (ccdc102a) from Danio rerio (Zebrafish).